Here is a 220-residue protein sequence, read N- to C-terminus: Small ribosomal subunit protein eS1 (220 aa).

Belongs to the eukaryotic ribosomal protein eS1 family.

This is Small ribosomal subunit protein eS1 from Pyrobaculum arsenaticum (strain DSM 13514 / JCM 11321 / PZ6).